We begin with the raw amino-acid sequence, 285 residues long: Stress response regulator protein 1 (285 aa).

2 stretches are compositionally biased toward low complexity: residues 43 to 58 and 128 to 138; these read DTSS…SSNN and SIISSKSSNKS. Disordered regions lie at residues 43-66 and 114-142; these read DTSS…SDQQ and PLTP…TTVV. The region spanning 158–276 is the Response regulatory domain; that stretch reads SFLIVDDNII…LDFMANSIDD (119 aa). At Asp-209 the chain carries 4-aspartylphosphate.

In terms of biological role, required for stress adaptation, morphogenesis and virulence. This chain is Stress response regulator protein 1 (SRR1), found in Candida dubliniensis (strain CD36 / ATCC MYA-646 / CBS 7987 / NCPF 3949 / NRRL Y-17841) (Yeast).